An 88-amino-acid chain; its full sequence is Small ribosomal subunit protein bS20 (88 aa).

The tract at residues 1–27 (MANIKSQIKRNKTNEKARLRNKAVKSS) is disordered.

Belongs to the bacterial ribosomal protein bS20 family.

In terms of biological role, binds directly to 16S ribosomal RNA. This chain is Small ribosomal subunit protein bS20, found in Streptomyces griseus subsp. griseus (strain JCM 4626 / CBS 651.72 / NBRC 13350 / KCC S-0626 / ISP 5235).